Here is a 228-residue protein sequence, read N- to C-terminus: Endo-1,4-beta-xylanase A (228 aa).

The signal sequence occupies residues 1–27 (MNLRKLRLLFVMCIGLTLILTAVPAHA). Residues 29–222 (TITNNEMGNH…SSGSANVMTN (194 aa)) form the GH11 domain. The Nucleophile role is filled by Glu-120. The active-site Proton donor is Glu-209.

Belongs to the glycosyl hydrolase 11 (cellulase G) family.

It carries out the reaction Endohydrolysis of (1-&gt;4)-beta-D-xylosidic linkages in xylans.. It functions in the pathway glycan degradation; xylan degradation. The protein is Endo-1,4-beta-xylanase A (xynA) of Bacillus pumilus (Bacillus mesentericus).